Consider the following 404-residue polypeptide: Tryptophan synthase beta chain (404 aa).

Lys98 bears the N6-(pyridoxal phosphate)lysine mark.

The protein belongs to the TrpB family. Tetramer of two alpha and two beta chains. Pyridoxal 5'-phosphate serves as cofactor.

The catalysed reaction is (1S,2R)-1-C-(indol-3-yl)glycerol 3-phosphate + L-serine = D-glyceraldehyde 3-phosphate + L-tryptophan + H2O. It participates in amino-acid biosynthesis; L-tryptophan biosynthesis; L-tryptophan from chorismate: step 5/5. Functionally, the beta subunit is responsible for the synthesis of L-tryptophan from indole and L-serine. This chain is Tryptophan synthase beta chain (trpB), found in Methanocaldococcus jannaschii (strain ATCC 43067 / DSM 2661 / JAL-1 / JCM 10045 / NBRC 100440) (Methanococcus jannaschii).